Here is a 178-residue protein sequence, read N- to C-terminus: MSRVGKKLLEIPSGVTVTLNDNTVTVKGPKGELTRTFHPDMKIKIEDNVLTVERPSDNKEHRALHGTTRSIIGNMVEGVSKGFERGLELVGVGYRASKSGNKLVLNVGYSHPVEIVPENGIEIEVPSQTKVVVKGTDKERVGATAANIRAVRSPEPYKGKGIRYEGEMVRRKEGKSAK.

It belongs to the universal ribosomal protein uL6 family. As to quaternary structure, part of the 50S ribosomal subunit.

Its function is as follows. This protein binds to the 23S rRNA, and is important in its secondary structure. It is located near the subunit interface in the base of the L7/L12 stalk, and near the tRNA binding site of the peptidyltransferase center. This chain is Large ribosomal subunit protein uL6, found in Bacillus licheniformis (strain ATCC 14580 / DSM 13 / JCM 2505 / CCUG 7422 / NBRC 12200 / NCIMB 9375 / NCTC 10341 / NRRL NRS-1264 / Gibson 46).